We begin with the raw amino-acid sequence, 330 residues long: DNA-directed RNA polymerase I subunit RPA43 (330 aa).

The segment at 251–330 (ADVTDVTPQE…ANFESPKKRQ (80 aa)) is disordered. Phosphoserine is present on residues serine 306, serine 318, and serine 325. Residues 317-330 (HSEEANFESPKKRQ) show a composition bias toward basic and acidic residues.

Belongs to the eukaryotic RPA43 RNA polymerase subunit family. In terms of assembly, component of the RNA polymerase I (Pol I) complex consisting of 13 subunits: a ten-subunit catalytic core composed of POLR1A/RPA1, POLR1B/RPA2, POLR1C/RPAC1, POLR1D/RPAC2, POLR1H/RPA12, POLR2E/RPABC1, POLR2F/RPABC2, POLR2H/RPABC3, POLR2K/RPABC4 and POLR2L/RPABC5; a mobile stalk subunit POLR1F/RPA43 protruding from the core and additional subunits homologous to general transcription factors POLR1E/RPA49 and POLR1G/RPA34. Interacts with RRN3/TIF-IA. Interacts with RRN3/TIF-IA. Widely expressed.

It is found in the nucleus. The protein localises to the nucleolus. In terms of biological role, component of RNA polymerase I (Pol I), a DNA-dependent RNA polymerase which synthesizes ribosomal RNA precursors using the four ribonucleoside triphosphates as substrates. Through its association with RRN3/TIF-IA may be involved in recruitment of Pol I to rDNA promoters. The sequence is that of DNA-directed RNA polymerase I subunit RPA43 from Mus musculus (Mouse).